A 438-amino-acid chain; its full sequence is Transmembrane protein 184C (438 aa).

The next 7 helical transmembrane spans lie at 17–37, 48–68, 86–106, 179–199, 212–232, 254–274, and 287–307; these read LVAV…VWEL, AWFI…WVIL, ILWM…YPGI, YTVV…LGIY, YLVI…LLFY, VVFV…VGVI, and AVAT…AAIA. Residues 355–438 form a disordered region; the sequence is RGHPRKKLFP…KEPSDKSVDS (84 aa). 2 stretches are compositionally biased toward low complexity: residues 374 to 390 and 404 to 413; these read SLLS…ASSM and TVTPQTTPTT. Phosphoserine is present on Ser-422. The segment covering 425–438 has biased composition (basic and acidic residues); that stretch reads IGEKKEPSDKSVDS.

It belongs to the TMEM184 family. Widely expressed with higher expression in lung, kidney, spleen, pancreas, thymus, prostate, testis, ovary, small intestine and thyroid.

Its subcellular location is the membrane. Functionally, possible tumor suppressor which may play a role in cell growth. This chain is Transmembrane protein 184C (TMEM184C), found in Homo sapiens (Human).